Consider the following 191-residue polypeptide: Fe/S biogenesis protein NfuA (191 aa).

Cys149 and Cys152 together coordinate [4Fe-4S] cluster.

This sequence belongs to the NfuA family. In terms of assembly, homodimer. Requires [4Fe-4S] cluster as cofactor.

Involved in iron-sulfur cluster biogenesis. Binds a 4Fe-4S cluster, can transfer this cluster to apoproteins, and thereby intervenes in the maturation of Fe/S proteins. Could also act as a scaffold/chaperone for damaged Fe/S proteins. In Salmonella typhi, this protein is Fe/S biogenesis protein NfuA.